The sequence spans 1862 residues: Transient receptor potential cation channel subfamily M member 7 (1862 aa).

Met-1 bears the N-acetylmethionine mark. Over 1 to 850 (MSQKSWIEST…ITRKFYAFYH (850 aa)) the chain is Cytoplasmic. Position 101 is a phosphoserine (Ser-101). Low complexity predominate over residues 544-554 (NRRSGRNASSS). A disordered region spans residues 544-574 (NRRSGRNASSSTPQLRKSHETFGNRADKKEK). Basic and acidic residues predominate over residues 560 to 573 (KSHETFGNRADKKE). A helical transmembrane segment spans residues 851–876 (APIVKFWFNTLAYLGFLMLYTFVVLV). Over 877-882 (QMEQLP) the chain is Extracellular. A helical membrane pass occupies residues 883–904 (SVQEWIVIAYIFTYAIEKIREV). The Cytoplasmic segment spans residues 905-923 (FMSEAGKISQKIKVWFSDY). A helical membrane pass occupies residues 924–943 (FNVSDTIAIISFFVGFGLRF). The Extracellular segment spans residues 944–956 (GAKWNYINAYDNH). The helical transmembrane segment at 957–980 (VFVAGRLIYCLNIIFWYVRLLDFL) threads the bilayer. The Cytoplasmic segment spans residues 981–999 (AVNQQAGPYVMMIGKMVAN). Residues 1000–1023 (MFYIVVIMALVLLSFGVPRKAILY) traverse the membrane as a helical segment. The Extracellular portion of the chain corresponds to 1024–1025 (PH). An intramembrane region (pore-forming) is located at residues 1026 to 1066 (EEPSWSLAKDIVFHPYWMIFGEVYAYEIDVCANDSALPTIC). Topologically, residues 1067-1069 (GPG) are extracellular. The helical transmembrane segment at 1070 to 1098 (TWLTPFLQAVYLFVQYIIMVNLLIAFFNN) threads the bilayer. Residues 1099-1862 (VYLQVKAISN…EATNSVRLML (764 aa)) are Cytoplasmic-facing. 3 S-palmitoyl cysteine lipidation sites follow: Cys-1143, Cys-1144, and Cys-1146. A Phosphothreonine modification is found at Thr-1163. Ser-1191, Ser-1193, Ser-1224, Ser-1255, and Ser-1258 each carry phosphoserine. Positions 1198–1250 (RVTFERVEQMSIQIKEVGDRVNYIKRSLQSLDSQIGHLQDLSALTVDTLKTLT) form a coiled coil. Thr-1265 is modified (phosphothreonine). Phosphoserine occurs at positions 1300, 1357, 1360, 1385, 1386, 1389, 1394, 1395, and 1403. Positions 1380-1418 (NQKLGSSPNSSPHMSSPPTKFSVSTPSQPSCKSHLESTT) are disordered. Low complexity predominate over residues 1385–1397 (SSPNSSPHMSSPP). A compositionally biased stretch (polar residues) spans 1398 to 1410 (TKFSVSTPSQPSC). Thr-1404 carries the phosphothreonine modification. Phosphoserine is present on residues Ser-1406 and Ser-1445. Thr-1454 carries the phosphothreonine modification. Ser-1455 is modified (phosphoserine). 2 positions are modified to phosphothreonine: Thr-1466 and Thr-1470. A disordered region spans residues 1485 to 1511 (TPTSLHSEQESCSRRASTEDSPDVDSR). Ser-1491, Ser-1497, Ser-1501, Ser-1510, and Ser-1530 each carry phosphoserine. Over residues 1491-1502 (SEQESCSRRAST) the composition is skewed to basic and acidic residues. The residue at position 1534 (Thr-1534) is a Phosphothreonine. The residue at position 1540 (Ser-1540) is a Phosphoserine. Thr-1548 carries the post-translational modification Phosphothreonine. 2 positions are modified to phosphoserine: Ser-1564 and Ser-1566. Thr-1580 bears the Phosphothreonine mark. The Alpha-type protein kinase domain maps to 1591 to 1821 (ILNNSMSSWS…CCRKLKLPDL (231 aa)). Phosphoserine is present on residues Ser-1595 and Ser-1612. 5 residues coordinate ADP: Gly-1618, Gly-1619, Leu-1620, Arg-1621, and Lys-1645. A Phosphoserine modification is found at Ser-1657. At Thr-1682 the chain carries Phosphothreonine. ADP is bound by residues Glu-1717, Glu-1718, and Met-1720. A Zn(2+)-binding site is contributed by His-1750. Residue Asp-1764 is the Proton acceptor of the active site. Asp-1774 contributes to the ADP binding site. Position 1776 is a phosphoserine (Ser-1776). His-1807, Cys-1809, and Cys-1813 together coordinate Zn(2+). Thr-1827 carries the post-translational modification Phosphothreonine. Positions 1840-1862 (DLNLQAGNSTKESEATNSVRLML) are disordered. Residues Ser-1848 and Ser-1857 each carry the phosphoserine modification.

In the C-terminal section; belongs to the protein kinase superfamily. Alpha-type protein kinase family. ALPK subfamily. This sequence in the N-terminal section; belongs to the transient receptor (TC 1.A.4) family. LTrpC subfamily. TRPM7 sub-subfamily. As to quaternary structure, homodimer. Homotetramer. Forms heteromers with TRPM6; heteromeric channels are functionally different from the homomeric channels. Interacts with PLCB1. The cofactor is Zn(2+). In terms of processing, palmitoylated; palmitoylation at Cys-1143, Cys-1144 and Cys-1146 promotes TRPM7 trafficking from the Golgi to the surface membrane. Post-translationally, autophosphorylated; autophosphorylation regulates TRPM7 kinase activity towards its substrates. The C-terminal kinase domain can be cleaved from the channel segment in a cell-type-specific fashion. TRPM7 is cleaved by caspase-8, dissociating the kinase from the ion-conducting pore. The cleaved kinase fragments (M7CKs) can translocate to the cell nucleus and binds chromatin-remodeling complex proteins in a Zn(2+)-dependent manner to ultimately phosphorylate specific Ser/Thr residues of histones.

The protein localises to the cell membrane. Its subcellular location is the cytoplasmic vesicle membrane. It is found in the nucleus. It carries out the reaction L-seryl-[protein] + ATP = O-phospho-L-seryl-[protein] + ADP + H(+). It catalyses the reaction L-threonyl-[protein] + ATP = O-phospho-L-threonyl-[protein] + ADP + H(+). The catalysed reaction is Mg(2+)(in) = Mg(2+)(out). The enzyme catalyses Ca(2+)(in) = Ca(2+)(out). It carries out the reaction Zn(2+)(in) = Zn(2+)(out). Channel displays constitutive activity. Channel activity is negatively regulated by cytosolic Mg(2+), Mg-ATP, low intracellular pH. Resting free cytosolic Mg(2+) and Mg-ATP concentrations seem to be sufficient to block native TRPM7 channel activity. TRPM7 channel activity is highly dependent on membrane levels of phosphatidylinositol 4,5 bisphosphate (PIP2). PIP2 hydrolysis negatively regulates TRPM7 channel activity. TRPM7 kinase activity does not affect channel activity. The kinase activity is controlled through the autophosphorylation of a serine/threonine-rich region located N-terminal to the catalytic domain. Bifunctional protein that combines an ion channel with an intrinsic kinase domain, enabling it to modulate cellular functions either by conducting ions through the pore or by phosphorylating downstream proteins via its kinase domain. The channel is highly permeable to divalent cations, specifically calcium (Ca2+), magnesium (Mg2+) and zinc (Zn2+) and mediates their influx. Controls a wide range of biological processes such as Ca2(+), Mg(2+) and Zn(2+) homeostasis, vesicular Zn(2+) release channel and intracellular Ca(2+) signaling, embryonic development, immune responses, cell motility, proliferation and differentiation. The C-terminal alpha-kinase domain autophosphorylates cytoplasmic residues of TRPM7. TRPM7 phosphorylates SMAD2, suggesting that TRPM7 kinase may play a role in activating SMAD signaling pathways. In vitro, TRPM7 kinase phosphorylates ANXA1 (annexin A1), myosin II isoforms and a variety of proteins with diverse cellular functions. In terms of biological role, the cleaved channel exhibits substantially higher current and potentiates Fas receptor signaling. Functionally, the C-terminal kinase domain can be cleaved from the channel segment in a cell-type-specific fashion. In immune cells, the TRPM7 kinase domain is clipped from the channel domain by caspases in response to Fas-receptor stimulation. The cleaved kinase fragments can translocate to the nucleus, and bind chromatin-remodeling complex proteins in a Zn(2+)-dependent manner to ultimately phosphorylate specific Ser/Thr residues of histones known to be functionally important for cell differentiation and embryonic development. This is Transient receptor potential cation channel subfamily M member 7 from Rattus norvegicus (Rat).